Reading from the N-terminus, the 256-residue chain is Thiazole synthase (256 aa).

Lysine 98 serves as the catalytic Schiff-base intermediate with DXP. 1-deoxy-D-xylulose 5-phosphate is bound by residues glycine 159, 185 to 186 (AG), and 207 to 208 (NT).

This sequence belongs to the ThiG family. In terms of assembly, homotetramer. Forms heterodimers with either ThiH or ThiS.

Its subcellular location is the cytoplasm. It catalyses the reaction [ThiS sulfur-carrier protein]-C-terminal-Gly-aminoethanethioate + 2-iminoacetate + 1-deoxy-D-xylulose 5-phosphate = [ThiS sulfur-carrier protein]-C-terminal Gly-Gly + 2-[(2R,5Z)-2-carboxy-4-methylthiazol-5(2H)-ylidene]ethyl phosphate + 2 H2O + H(+). It participates in cofactor biosynthesis; thiamine diphosphate biosynthesis. Catalyzes the rearrangement of 1-deoxy-D-xylulose 5-phosphate (DXP) to produce the thiazole phosphate moiety of thiamine. Sulfur is provided by the thiocarboxylate moiety of the carrier protein ThiS. In vitro, sulfur can be provided by H(2)S. This is Thiazole synthase from Aliivibrio salmonicida (strain LFI1238) (Vibrio salmonicida (strain LFI1238)).